Reading from the N-terminus, the 313-residue chain is Cytochrome c biogenesis protein CcsA (313 aa).

8 helical membrane passes run 9–29 (ILTHISFSIVSIVITIHLITL), 44–64 (GIIVTFFCITGLLVTRWISSG), 71–91 (LYESLIFLSWSFSLIHIIPYF), 101–121 (IIGPSAIFTQGFATSGILTEI), 143–163 (MILGYAALLCGSLLSVALLVI), 217–237 (VISLGFTFLTIGILSGAVWAN), 244–264 (WNWDPKETWAFITWIVFAIYL), and 278–298 (AIVASIGFLIIWICYFGVNLL).

The protein belongs to the CcmF/CycK/Ccl1/NrfE/CcsA family. May interact with Ccs1.

Its subcellular location is the plastid. The protein resides in the chloroplast thylakoid membrane. Required during biogenesis of c-type cytochromes (cytochrome c6 and cytochrome f) at the step of heme attachment. This Nicotiana tomentosiformis (Tobacco) protein is Cytochrome c biogenesis protein CcsA.